We begin with the raw amino-acid sequence, 104 residues long: L-rhamnose mutarotase (104 aa).

Residue Y18 participates in substrate binding. The Proton donor role is filled by H22. Substrate contacts are provided by residues Y41 and 76 to 77; that span reads WW.

It belongs to the rhamnose mutarotase family. As to quaternary structure, homodimer.

It localises to the cytoplasm. The enzyme catalyses alpha-L-rhamnose = beta-L-rhamnose. It functions in the pathway carbohydrate metabolism; L-rhamnose metabolism. Its function is as follows. Involved in the anomeric conversion of L-rhamnose. The sequence is that of L-rhamnose mutarotase from Sinorhizobium medicae (strain WSM419) (Ensifer medicae).